The sequence spans 202 residues: Small ribosomal subunit protein uS4 (202 aa).

An S4 RNA-binding domain is found at 91–154 (SMLSSVLYNS…VNLPSVLAAI (64 aa)).

Belongs to the universal ribosomal protein uS4 family. In terms of assembly, part of the 30S ribosomal subunit. Contacts protein S5. The interaction surface between S4 and S5 is involved in control of translational fidelity.

Functionally, one of the primary rRNA binding proteins, it binds directly to 16S rRNA where it nucleates assembly of the body of the 30S subunit. With S5 and S12 plays an important role in translational accuracy. The polypeptide is Small ribosomal subunit protein uS4 (Ehrlichia ruminantium (strain Gardel)).